The primary structure comprises 93 residues: MAKEELIQFEGLVTEILPDARYRVQLDAGHEIVAYTAGKMKKNRIKTLAGDRVTIEMSPYDLEKGRLIFRHKDERPGGGPPRGAPPRGQFRRR.

The region spanning 1–72 (MAKEELIQFE…EKGRLIFRHK (72 aa)) is the S1-like domain. The segment at 70-93 (RHKDERPGGGPPRGAPPRGQFRRR) is disordered.

The protein belongs to the IF-1 family. In terms of assembly, component of the 30S ribosomal translation pre-initiation complex which assembles on the 30S ribosome in the order IF-2 and IF-3, IF-1 and N-formylmethionyl-tRNA(fMet); mRNA recruitment can occur at any time during PIC assembly.

The protein localises to the cytoplasm. In terms of biological role, one of the essential components for the initiation of protein synthesis. Stabilizes the binding of IF-2 and IF-3 on the 30S subunit to which N-formylmethionyl-tRNA(fMet) subsequently binds. Helps modulate mRNA selection, yielding the 30S pre-initiation complex (PIC). Upon addition of the 50S ribosomal subunit IF-1, IF-2 and IF-3 are released leaving the mature 70S translation initiation complex. This Rhodopseudomonas palustris (strain BisB18) protein is Translation initiation factor IF-1.